A 188-amino-acid polypeptide reads, in one-letter code: Holliday junction branch migration complex subunit RuvA (188 aa).

The interval 1 to 63 is domain I; that stretch reads MIEIIEGIYK…QEDMTIYGFD (63 aa). Residues 64 to 142 are domain II; that stretch reads SKVKKETFEK…VVEVNEEMLE (79 aa). Residue E142 is a region of interest, flexible linker. The tract at residues 142 to 188 is domain III; that stretch reads EAIEALVSLGYSKTQARNAVSKVLKESPNISNVSKIIKEALKILAKI.

This sequence belongs to the RuvA family. In terms of assembly, homotetramer. Forms an RuvA(8)-RuvB(12)-Holliday junction (HJ) complex. HJ DNA is sandwiched between 2 RuvA tetramers; dsDNA enters through RuvA and exits via RuvB. An RuvB hexamer assembles on each DNA strand where it exits the tetramer. Each RuvB hexamer is contacted by two RuvA subunits (via domain III) on 2 adjacent RuvB subunits; this complex drives branch migration. In the full resolvosome a probable DNA-RuvA(4)-RuvB(12)-RuvC(2) complex forms which resolves the HJ.

It is found in the cytoplasm. Its function is as follows. The RuvA-RuvB-RuvC complex processes Holliday junction (HJ) DNA during genetic recombination and DNA repair, while the RuvA-RuvB complex plays an important role in the rescue of blocked DNA replication forks via replication fork reversal (RFR). RuvA specifically binds to HJ cruciform DNA, conferring on it an open structure. The RuvB hexamer acts as an ATP-dependent pump, pulling dsDNA into and through the RuvAB complex. HJ branch migration allows RuvC to scan DNA until it finds its consensus sequence, where it cleaves and resolves the cruciform DNA. This is Holliday junction branch migration complex subunit RuvA from Fervidobacterium nodosum (strain ATCC 35602 / DSM 5306 / Rt17-B1).